Consider the following 575-residue polypeptide: Melatonin-related receptor (575 aa).

At 1–30 the chain is on the extracellular side; sequence MGRTLAVPTPYGCIGCKLPQPDYPPALIVF. Residues 31 to 51 form a helical membrane-spanning segment; it reads MFCAMVITIVVDLIGNSMVIL. Over 52-64 the chain is Cytoplasmic; the sequence is AVSKNKKLRNSGN. A helical membrane pass occupies residues 65 to 85; it reads VFVVSLSVADMLVAIYPYPLM. Over 86–103 the chain is Extracellular; the sequence is LHAMAIGGWDLSKLQCQM. Residues cysteine 101 and cysteine 178 are joined by a disulfide bond. A helical membrane pass occupies residues 104–124; the sequence is VGFITGLSVVGSIFNIMAIAI. At 125–143 the chain is on the cytoplasmic side; that stretch reads NRYCYICHSLQYERIFSVR. Residues 144–164 form a helical membrane-spanning segment; the sequence is NTCIYLAVTWIMTVLAVLPNM. The Extracellular segment spans residues 165-188; sequence YIGTIEYDPRTYTCIFNYVNNPAF. Residues 189–209 traverse the membrane as a helical segment; sequence AVTIVCIHFVLPLLIVGFCYV. Residues 210–239 lie on the Cytoplasmic side of the membrane; the sequence is KIWTKVLAARDPAGQNPDNQLAEVRNFLTM. The chain crosses the membrane as a helical span at residues 240-260; it reads FVIFLLFAVCWCPINALTVLV. Over 261-273 the chain is Extracellular; the sequence is AVNPKEMAGKIPN. A helical membrane pass occupies residues 274–294; the sequence is WVYLAAYFIAYFNSCLNAVIY. Over 295–575 the chain is Cytoplasmic; that stretch reads GVLNENFRRE…VDADSDEMAV (281 aa). Disordered stretches follow at residues 368-421 and 446-474; these read VPLP…TVYP and SSHP…TGYT. The segment covering 455–474 has biased composition (polar residues); the sequence is PSKTAISPATSFPKPTTGYT.

It belongs to the G-protein coupled receptor 1 family. As to quaternary structure, homodimer, and heterodimer with MTNR1A and MTNR1B. Interacts with KAT5. Interacts with RTN4 isoform A/NOGO-A. Interacts with TGFBR1.

The protein resides in the cell membrane. G protein-coupled receptor that plays a role in numerous physiological processes including regulation of energy metabolism, neurite outgrowth or cell migration. Promotes self-renewal and neuronal differentiation of neural progenitor cells through activation of the NOTCH and WNT/beta-catenin signaling pathways. Modulates the KAT5-dependent glucocorticoid receptor signaling by modulating KAT5 subcellular compartmentalisation. Also plays a role in the activation TGFBR1 in the absence of TGFBR2 by interfering with FKBP1A binding to TGFBR1, leading to induction of both canonical and non-canonical SMAD signaling pathways resulting in inhibition of proliferation or promotion of migration. The protein is Melatonin-related receptor (GPR50) of Ovis aries (Sheep).